A 359-amino-acid polypeptide reads, in one-letter code: Photosystem II protein D1 1 (359 aa).

Helical transmembrane passes span 29–46, 118–133, and 142–156; these read YVGW…AATT, HFLI…EWEL, and WICI…AASA. Position 118 (histidine 118) interacts with chlorophyll a. Position 126 (tyrosine 126) interacts with pheophytin a. [CaMn4O5] cluster-binding residues include aspartate 170 and glutamate 189. The chain crosses the membrane as a helical span at residues 197–218; it reads FHMLGVAGVFGGSLFSAMHGSL. Histidine 198 lines the chlorophyll a pocket. A quinone is bound by residues histidine 215 and 264–265; that span reads SF. Histidine 215 contributes to the Fe cation binding site. Fe cation is bound at residue histidine 272. Residues 274-288 form a helical membrane-spanning segment; it reads FLAAWPVVGIWFTAL. Histidine 332, glutamate 333, aspartate 342, and alanine 344 together coordinate [CaMn4O5] cluster. Residues 345–359 constitute a propeptide that is removed on maturation; it reads AAESAPVALQAPAIG.

The protein belongs to the reaction center PufL/M/PsbA/D family. PSII is composed of 1 copy each of membrane proteins PsbA, PsbB, PsbC, PsbD, PsbE, PsbF, PsbH, PsbI, PsbJ, PsbK, PsbL, PsbM, PsbT, PsbX, PsbY, PsbZ, Psb30/Ycf12, peripheral proteins PsbO, CyanoQ (PsbQ), PsbU, PsbV and a large number of cofactors. It forms dimeric complexes. It depends on The D1/D2 heterodimer binds P680, chlorophylls that are the primary electron donor of PSII, and subsequent electron acceptors. It shares a non-heme iron and each subunit binds pheophytin, quinone, additional chlorophylls, carotenoids and lipids. D1 provides most of the ligands for the Mn4-Ca-O5 cluster of the oxygen-evolving complex (OEC). There is also a Cl(-1) ion associated with D1 and D2, which is required for oxygen evolution. The PSII complex binds additional chlorophylls, carotenoids and specific lipids. as a cofactor. Post-translationally, tyr-161 forms a radical intermediate that is referred to as redox-active TyrZ, YZ or Y-Z. C-terminally processed by CtpA; processing is essential to allow assembly of the oxygen-evolving complex and thus photosynthetic growth.

Its subcellular location is the cellular thylakoid membrane. The enzyme catalyses 2 a plastoquinone + 4 hnu + 2 H2O = 2 a plastoquinol + O2. Photosystem II (PSII) is a light-driven water:plastoquinone oxidoreductase that uses light energy to abstract electrons from H(2)O, generating O(2) and a proton gradient subsequently used for ATP formation. It consists of a core antenna complex that captures photons, and an electron transfer chain that converts photonic excitation into a charge separation. The D1/D2 (PsbA/PsbD) reaction center heterodimer binds P680, the primary electron donor of PSII as well as several subsequent electron acceptors. This chain is Photosystem II protein D1 1, found in Synechococcus sp. (strain RCC307).